The chain runs to 338 residues: GTPase Obg (338 aa).

Residues 1-159 (MSFIDEVKIN…RWIRMELKLM (159 aa)) enclose the Obg domain. Positions 58 to 79 (DLRQHPHQKAGRGKNGMGSDRH) are disordered. Residues 160–331 (ADVGLLGMPS…LLDDIAFNLW (172 aa)) enclose the OBG-type G domain. Residues 166 to 173 (GMPSVGKS), 191 to 195 (FTTLK), 213 to 216 (DIPG), 283 to 286 (NKID), and 312 to 314 (SAA) contribute to the GTP site. Residues S173 and T193 each contribute to the Mg(2+) site.

This sequence belongs to the TRAFAC class OBG-HflX-like GTPase superfamily. OBG GTPase family. As to quaternary structure, monomer. Mg(2+) is required as a cofactor.

Its subcellular location is the cytoplasm. Its function is as follows. An essential GTPase which binds GTP, GDP and possibly (p)ppGpp with moderate affinity, with high nucleotide exchange rates and a fairly low GTP hydrolysis rate. Plays a role in control of the cell cycle, stress response, ribosome biogenesis and in those bacteria that undergo differentiation, in morphogenesis control. This Citrifermentans bemidjiense (strain ATCC BAA-1014 / DSM 16622 / JCM 12645 / Bem) (Geobacter bemidjiensis) protein is GTPase Obg.